Reading from the N-terminus, the 433-residue chain is Transcriptional enhancer factor TEF-5 (433 aa).

Residues methionine 1–proline 12 are compositionally biased toward polar residues. The segment at methionine 1 to tryptophan 35 is disordered. The segment covering glutamate 14–aspartate 28 has biased composition (basic and acidic residues). Residues aspartate 28 to glycine 104 constitute a DNA-binding region (TEA). Residues glycine 171–aspartate 433 form a transcriptional activation region.

As to expression, high levels in cardiac muscle, low in skeletal muscle. Intermediate levels in gizzard and lung, low levels in kidney.

It localises to the nucleus. Transcription factor which plays a key role in the Hippo signaling pathway, a pathway involved in organ size control and tumor suppression by restricting proliferation and promoting apoptosis. The core of this pathway is composed of a kinase cascade wherein MST1/MST2, in complex with its regulatory protein SAV1, phosphorylates and activates LATS1/2 in complex with its regulatory protein MOB1, which in turn phosphorylates and inactivates YAP1 oncoprotein and WWTR1/TAZ. This chain is Transcriptional enhancer factor TEF-5 (TEAD3), found in Gallus gallus (Chicken).